The chain runs to 133 residues: uncharacterized protein (133 aa).

A helical transmembrane segment spans residues 11 to 31 (YFLISVFLIFIVSGITYFYST).

Its subcellular location is the membrane. This is an uncharacterized protein from Borreliella burgdorferi (strain ATCC 35210 / DSM 4680 / CIP 102532 / B31) (Borrelia burgdorferi).